A 297-amino-acid chain; its full sequence is Elongation factor Ts (297 aa).

Residues 82–85 form an involved in Mg(2+) ion dislocation from EF-Tu region; it reads TDFV.

It belongs to the EF-Ts family.

Its subcellular location is the cytoplasm. Its function is as follows. Associates with the EF-Tu.GDP complex and induces the exchange of GDP to GTP. It remains bound to the aminoacyl-tRNA.EF-Tu.GTP complex up to the GTP hydrolysis stage on the ribosome. The protein is Elongation factor Ts of Azoarcus sp. (strain BH72).